Consider the following 80-residue polypeptide: Cytochrome c oxidase subunit 7A1, mitochondrial (80 aa).

The N-terminal 21 residues, 1–21 (MRALRVSQALVRSFSSTARNR), are a transit peptide targeting the mitochondrion. The Mitochondrial matrix portion of the chain corresponds to 22–46 (LENRVAEKQKIFQADNDLPVHLKGG). The chain crosses the membrane as a helical span at residues 47–75 (ATDNILYRVTMTLCLGGTVYSLYCLGWAS). The Mitochondrial intermembrane portion of the chain corresponds to 76 to 80 (FPHKK).

Belongs to the cytochrome c oxidase VIIa family. Component of the complex IV (CIV, cytochrome c oxidase), a multisubunit enzyme composed of 14 subunits. The complex is composed of a catalytic core of 3 subunits MT-CO1, MT-CO2 and MT-CO3, encoded in the mitochondrial DNA, and 11 supernumerary subunits COX4I1 (or COX4I2), COX5A, COX5B, COX6A2 (or COX6A1), COX6B1 (or COX6B2), COX6C, COX7A1 (or COX7A2), COX7B, COX7C, COX8B and NDUFA4, which are encoded in the nuclear genome. The complex exists as a monomer or a dimer and forms supercomplexes (SCs) in the inner mitochondrial membrane with NADH-ubiquinone oxidoreductase (complex I, CI) and ubiquinol-cytochrome c oxidoreductase (cytochrome b-c1 complex, complex III, CIII), resulting in different assemblies (supercomplex SCI(1)III(2)IV(1) and megacomplex MCI(2)III(2)IV(2)).

The protein localises to the mitochondrion inner membrane. It participates in energy metabolism; oxidative phosphorylation. In terms of biological role, component of the mitochondrial respiratory complex IV (CIV, also named cytochrome c oxidase complex), the last enzyme in the mitochondrial electron transport chain which drives oxidative phosphorylation. The CIV complex is the component of the respiratory chain that catalyzes the reduction of oxygen to water. Acts as an assembly factor that specifically drives the homodimerization of CIV complexes, mediating the formation of mitochondrial respiratory supercomplexes (respirasomes) containing two CIV: supercomplxes with two molecules of CIV show improved activity. Despite being highly expressed in brown adipose tissue, not required for thermogenesis. This Sus scrofa (Pig) protein is Cytochrome c oxidase subunit 7A1, mitochondrial (COX7A1).